A 615-amino-acid polypeptide reads, in one-letter code: MILDKVNSPEDLKRLSLEELLLLAEEIRSEIIRVTAQNGGHLASSLGAVELVLALHRVFDSPRDRILFDVGHQAYAHKLVTGRKDRFHTLRKEGGISGFTKVSESPHDAITAGHASTSLANALGMVLARDLMGEDYHVVAVIGDGALTGGMALAALNKIGELQKRMLIVLNDNEMSISENVGALNKYFKELQIRKWVQDAEKLGKNILERISPQLFGLVDRAKEAAKFLLHQENPFYAWGIRYVGPVDGHDLKGLVHILEHLKALDGPTLLHVVTKKGKGYKVAEADPIYWHGPPGFDPKKPEKVSKGYTWSQAFGDAVTELAHMEPRLFVLTPAMREGSGLVRYSLEHPERYLDVGICEDVAVTTAAGLALRGMKPIVAIYSTFLQRAYDQVIHDVAIENLPVVFAIDRAGIVGADGATHHGVFDIAYLRTVPNLQIAAPKDALELRAMLKKALEVGGPVAIRYPRDNVERAPEGVWPEIAWGKWEVLKEGTEAYILAFGKTLRYALEAAGDDPRVGVVNARFLKPLDREMLRELSRYKLLTVEDHQKMGGFGSAVLEALNEMGLKPEVQILGLPDRFFEHGAIPSLHRQAGIDAEGIRKALAAMGVALVHERA.

Residues histidine 72 and 113–115 (GHA) each bind thiamine diphosphate. Residue aspartate 144 coordinates Mg(2+). Thiamine diphosphate-binding positions include 145 to 146 (GA), asparagine 173, tyrosine 281, and glutamate 360. A Mg(2+)-binding site is contributed by asparagine 173.

The protein belongs to the transketolase family. DXPS subfamily. Homodimer. It depends on Mg(2+) as a cofactor. The cofactor is thiamine diphosphate.

It carries out the reaction D-glyceraldehyde 3-phosphate + pyruvate + H(+) = 1-deoxy-D-xylulose 5-phosphate + CO2. It participates in metabolic intermediate biosynthesis; 1-deoxy-D-xylulose 5-phosphate biosynthesis; 1-deoxy-D-xylulose 5-phosphate from D-glyceraldehyde 3-phosphate and pyruvate: step 1/1. In terms of biological role, catalyzes the acyloin condensation reaction between C atoms 2 and 3 of pyruvate and glyceraldehyde 3-phosphate to yield 1-deoxy-D-xylulose-5-phosphate (DXP). The sequence is that of 1-deoxy-D-xylulose-5-phosphate synthase from Thermus thermophilus (strain ATCC 27634 / DSM 579 / HB8).